Here is a 78-residue protein sequence, read N- to C-terminus: Acyl carrier protein (78 aa).

Positions 2 to 77 constitute a Carrier domain; it reads SDTAERIKKI…DAVSYIDEHK (76 aa). Serine 37 carries the O-(pantetheine 4'-phosphoryl)serine modification.

Belongs to the acyl carrier protein (ACP) family. 4'-phosphopantetheine is transferred from CoA to a specific serine of apo-ACP by AcpS. This modification is essential for activity because fatty acids are bound in thioester linkage to the sulfhydryl of the prosthetic group.

The protein localises to the cytoplasm. Its pathway is lipid metabolism; fatty acid biosynthesis. Functionally, carrier of the growing fatty acid chain in fatty acid biosynthesis. This Zymomonas mobilis subsp. mobilis (strain ATCC 31821 / ZM4 / CP4) protein is Acyl carrier protein.